The following is a 494-amino-acid chain: Acetyl-coenzyme A carboxylase carboxyl transferase subunit beta, chloroplastic (494 aa).

The 269-residue stretch at Leu226 to His494 folds into the CoA carboxyltransferase N-terminal domain. Residues Cys230, Cys233, Cys249, and Cys252 each contribute to the Zn(2+) site. The segment at Cys230 to Cys252 adopts a C4-type zinc-finger fold.

Belongs to the AccD/PCCB family. In terms of assembly, acetyl-CoA carboxylase is a heterohexamer composed of biotin carboxyl carrier protein, biotin carboxylase and 2 subunits each of ACCase subunit alpha and ACCase plastid-coded subunit beta (accD). Zn(2+) is required as a cofactor.

It localises to the plastid. Its subcellular location is the chloroplast stroma. It carries out the reaction N(6)-carboxybiotinyl-L-lysyl-[protein] + acetyl-CoA = N(6)-biotinyl-L-lysyl-[protein] + malonyl-CoA. Its pathway is lipid metabolism; malonyl-CoA biosynthesis; malonyl-CoA from acetyl-CoA: step 1/1. Functionally, component of the acetyl coenzyme A carboxylase (ACC) complex. Biotin carboxylase (BC) catalyzes the carboxylation of biotin on its carrier protein (BCCP) and then the CO(2) group is transferred by the transcarboxylase to acetyl-CoA to form malonyl-CoA. The chain is Acetyl-coenzyme A carboxylase carboxyl transferase subunit beta, chloroplastic from Coffea arabica (Arabian coffee).